Here is a 275-residue protein sequence, read N- to C-terminus: NH(3)-dependent NAD(+) synthetase (275 aa).

47–54 (GISGGQDS) contacts ATP. Residue aspartate 53 coordinates Mg(2+). Arginine 141 provides a ligand contact to deamido-NAD(+). Threonine 161 serves as a coordination point for ATP. Glutamate 166 lines the Mg(2+) pocket. Positions 174 and 181 each coordinate deamido-NAD(+). Lysine 190 and threonine 212 together coordinate ATP. 261 to 262 (HK) lines the deamido-NAD(+) pocket.

Belongs to the NAD synthetase family. As to quaternary structure, homodimer.

The enzyme catalyses deamido-NAD(+) + NH4(+) + ATP = AMP + diphosphate + NAD(+) + H(+). It functions in the pathway cofactor biosynthesis; NAD(+) biosynthesis; NAD(+) from deamido-NAD(+) (ammonia route): step 1/1. Functionally, catalyzes the ATP-dependent amidation of deamido-NAD to form NAD. Uses ammonia as a nitrogen source. This chain is NH(3)-dependent NAD(+) synthetase, found in Lacticaseibacillus paracasei (strain ATCC 334 / BCRC 17002 / CCUG 31169 / CIP 107868 / KCTC 3260 / NRRL B-441) (Lactobacillus paracasei).